Consider the following 362-residue polypeptide: S-adenosylmethionine decarboxylase proenzyme (362 aa).

Catalysis depends on residues E13 and E16. Catalysis depends on S73, which acts as the Schiff-base intermediate with substrate; via pyruvic acid. A Pyruvic acid (Ser); by autocatalysis modification is found at S73. The active-site Proton donor; for catalytic activity is the C87. Active-site proton acceptor; for processing activity residues include S236 and H249.

It belongs to the eukaryotic AdoMetDC family. It depends on pyruvate as a cofactor. In terms of processing, is synthesized initially as an inactive proenzyme. Formation of the active enzyme involves a self-maturation process in which the active site pyruvoyl group is generated from an internal serine residue via an autocatalytic post-translational modification. Two non-identical subunits are generated from the proenzyme in this reaction, and the pyruvate is formed at the N-terminus of the alpha chain, which is derived from the carboxyl end of the proenzyme. The post-translation cleavage follows an unusual pathway, termed non-hydrolytic serinolysis, in which the side chain hydroxyl group of the serine supplies its oxygen atom to form the C-terminus of the beta chain, while the remainder of the serine residue undergoes an oxidative deamination to produce ammonia and the pyruvoyl group blocking the N-terminus of the alpha chain.

The enzyme catalyses S-adenosyl-L-methionine + H(+) = S-adenosyl 3-(methylsulfanyl)propylamine + CO2. It participates in amine and polyamine biosynthesis; S-adenosylmethioninamine biosynthesis; S-adenosylmethioninamine from S-adenosyl-L-methionine: step 1/1. The polypeptide is S-adenosylmethionine decarboxylase proenzyme (SAMDC) (Datura stramonium (Jimsonweed)).